The primary structure comprises 447 residues: Ribulose bisphosphate carboxylase large chain (447 aa).

Lys-5 carries the N6,N6,N6-trimethyllysine modification. Substrate contacts are provided by Asn-114 and Thr-164. The Proton acceptor role is filled by Lys-166. Lys-168 contacts substrate. Residues Lys-192, Asp-194, and Glu-195 each contribute to the Mg(2+) site. The residue at position 192 (Lys-192) is an N6-carboxylysine. The active-site Proton acceptor is the His-285. Substrate-binding residues include Arg-286, His-318, and Ser-370.

The protein belongs to the RuBisCO large chain family. Type I subfamily. Heterohexadecamer of 8 large chains and 8 small chains; disulfide-linked. The disulfide link is formed within the large subunit homodimers. Mg(2+) serves as cofactor. The disulfide bond which can form in the large chain dimeric partners within the hexadecamer appears to be associated with oxidative stress and protein turnover.

The protein resides in the plastid. Its subcellular location is the chloroplast. It catalyses the reaction 2 (2R)-3-phosphoglycerate + 2 H(+) = D-ribulose 1,5-bisphosphate + CO2 + H2O. The catalysed reaction is D-ribulose 1,5-bisphosphate + O2 = 2-phosphoglycolate + (2R)-3-phosphoglycerate + 2 H(+). Its function is as follows. RuBisCO catalyzes two reactions: the carboxylation of D-ribulose 1,5-bisphosphate, the primary event in carbon dioxide fixation, as well as the oxidative fragmentation of the pentose substrate in the photorespiration process. Both reactions occur simultaneously and in competition at the same active site. This Camassia leichtlinii (Western quamash) protein is Ribulose bisphosphate carboxylase large chain.